The following is a 970-amino-acid chain: ATP-dependent DNA helicase DDX11 (970 aa).

The region spanning 9 to 445 (GAIHFPFPFT…KNLMYLKQIL (437 aa)) is the Helicase ATP-binding domain. 44-51 (SPTGTGKS) lines the ATP pocket. Ser262 carries the phosphoserine modification. Residues Cys267 and Cys285 each contribute to the [4Fe-4S] cluster site. Over residues 289 to 304 (QRSRHEKKKGAEEEKP) the composition is skewed to basic and acidic residues. Positions 289 to 312 (QRSRHEKKKGAEEEKPKRRRQEKQ) are disordered. Residues Cys315 and Cys350 each coordinate [4Fe-4S] cluster. A DEAH box motif is present at residues 393–396 (DEAH). A disordered region spans residues 818–849 (TLSPRPGTPREGSGGEPVHEGRQPVHRQGHQA).

This sequence belongs to the DEAD box helicase family. DEAH subfamily. DDX11/CHL1 sub-subfamily. In terms of assembly, associates with the CTF18-RFC complex. Associates with a cohesin complex composed of RAD21, SMC1 proteins and SMC3. Interacts with CHTF18. Interacts with DSCC1. Interacts with FEN1; this interaction is direct and increases flap endonuclease activity of FEN1. Interacts with PCNA. Interacts with POLR1A and UBTF. Interacts with RAD21, SMC1 proteins and SMC3. Interacts with RFC2. Interacts with TIMELESS; this interaction increases recruitment of both proteins onto chromatin in response to replication stress induction by hydroxyurea. (Microbial infection) Interacts with bovine papillomavirus type 1 regulatory protein E2; this interaction stimulates the recruitment of E2 onto mitotic chromosomes. Mg(2+) is required as a cofactor. The cofactor is [4Fe-4S] cluster. As to expression, expressed in melanoma cells. Not detected in epidermal melanocytes of normal skin (at protein level). Highly expressed in spleen, B-cells, thymus, testis, ovary, small intestine and pancreas. Very low expression seen in brain. Expressed in dividing cells and/or cells undergoing high levels of recombination. No expression detected in cells signaled to terminally differentiate. Expressed weakly in keratinocytes.

The protein resides in the nucleus. Its subcellular location is the nucleolus. It is found in the cytoplasm. It localises to the cytoskeleton. The protein localises to the spindle pole. The protein resides in the midbody. Its subcellular location is the microtubule organizing center. It is found in the centrosome. It localises to the chromosome. It carries out the reaction Couples ATP hydrolysis with the unwinding of duplex DNA at the replication fork by translocating in the 5'-3' direction. This creates two antiparallel DNA single strands (ssDNA). The leading ssDNA polymer is the template for DNA polymerase III holoenzyme which synthesizes a continuous strand.. The enzyme catalyses ATP + H2O = ADP + phosphate + H(+). ATPase activity is stimulated by high magnesium salt levels (up to a 0.1 M), and potassium salts (glutamate, chloride or acetate) are more effective than the corresponding sodium salts. ATPase activity is enhanced by the long non-coding RNA (lncRNA) cohesion regulator noncoding RNA (CONCR). Double-stranded DNA helicase activity is maximal with magnesium ions at low concentrations (0.5-1 mM) whereas is markedly inhibited at higher levels (5 mM and above). Double-stranded DNA helicase activity is stimulated by 25-50 mM potassium acetate, stimulated to a lesser extent by 25 mM of ammonium acetate, and markedly inhibited by sodium acetate. Functionally, DNA-dependent ATPase and ATP-dependent DNA helicase that participates in various functions in genomic stability, including DNA replication, DNA repair and heterochromatin organization as well as in ribosomal RNA synthesis. Its double-stranded DNA helicase activity requires either a minimal 5'-single-stranded tail length of approximately 15 nt (flap substrates) or 10 nt length single-stranded gapped DNA substrates of a partial duplex DNA structure for helicase loading and translocation along DNA in a 5' to 3' direction. The helicase activity is capable of displacing duplex regions up to 100 bp, which can be extended up to 500 bp by the replication protein A (RPA) or the cohesion CTF18-replication factor C (Ctf18-RFC) complex activities. Also shows ATPase- and helicase activities on substrates that mimic key DNA intermediates of replication, repair and homologous recombination reactions, including forked duplex, anti-parallel G-quadruplex and three-stranded D-loop DNA molecules. Plays a role in DNA double-strand break (DSB) repair at the DNA replication fork during DNA replication recovery from DNA damage. Recruited with TIMELESS factor upon DNA-replication stress response at DNA replication fork to preserve replication fork progression, and hence ensure DNA replication fidelity. Also cooperates with TIMELESS factor during DNA replication to regulate proper sister chromatid cohesion and mitotic chromosome segregation. Stimulates 5'-single-stranded DNA flap endonuclease activity of FEN1 in an ATP- and helicase-independent manner; and hence it may contribute in Okazaki fragment processing at DNA replication fork during lagging strand DNA synthesis. Its ability to function at DNA replication fork is modulated by its binding to long non-coding RNA (lncRNA) cohesion regulator non-coding RNA DDX11-AS1/CONCR, which is able to increase both DDX11 ATPase activity and binding to DNA replicating regions. Also plays a role in heterochromatin organization. Involved in rRNA transcription activation through binding to active hypomethylated rDNA gene loci by recruiting UBTF and the RNA polymerase Pol I transcriptional machinery. Plays a role in embryonic development and prevention of aneuploidy. Involved in melanoma cell proliferation and survival. Associates with chromatin at DNA replication fork regions. Binds to single- and double-stranded DNAs. (Microbial infection) Required for bovine papillomavirus type 1 regulatory protein E2 loading onto mitotic chromosomes during DNA replication for the viral genome to be maintained and segregated. This chain is ATP-dependent DNA helicase DDX11, found in Homo sapiens (Human).